A 313-amino-acid polypeptide reads, in one-letter code: Nodulation protein D 3 (313 aa).

Residues 6 to 63 enclose the HTH lysR-type domain; it reads LDLNLLVALDALMTKRSVTAAARSINLSQPAMSSAIARLRSYFQDELFRMQGRELITT. The H-T-H motif DNA-binding region spans 23–42; the sequence is VTAAARSINLSQPAMSSAIA.

Belongs to the LysR transcriptional regulatory family.

Its function is as follows. NodD regulates the expression of the nodABCFE genes which encode other nodulation proteins. NodD is also a negative regulator of its own expression. Binds flavonoids as inducers. The sequence is that of Nodulation protein D 3 (nodD3) from Rhizobium meliloti (strain 1021) (Ensifer meliloti).